The sequence spans 195 residues: MDFQVVIFILCYLIGSIPFGFILSYVIGIGDIRKTGSGNIGATNVFRKNKKLALLTLLLDALKSFICVAIAQKYNIDNTILFLAALFAIIGHMFPVYLFFKGGKGVAPLLGSLIFIDYRVAVCFLTFWIICFLLCKYASLSSIVSTLIALLFICTCYTIVQSVIFTITALLIITQHTDNIIRMLNKSENKINLKL.

A run of 5 helical transmembrane segments spans residues 7 to 27, 52 to 72, 80 to 100, 113 to 133, and 147 to 167; these read IFILCYLIGSIPFGFILSYVI, LALLTLLLDALKSFICVAIAQ, ILFLAALFAIIGHMFPVYLFF, LIFIDYRVAVCFLTFWIICFL, and LIALLFICTCYTIVQSVIFTI.

This sequence belongs to the PlsY family. In terms of assembly, probably interacts with PlsX.

Its subcellular location is the cell inner membrane. It catalyses the reaction an acyl phosphate + sn-glycerol 3-phosphate = a 1-acyl-sn-glycero-3-phosphate + phosphate. It functions in the pathway lipid metabolism; phospholipid metabolism. Functionally, catalyzes the transfer of an acyl group from acyl-phosphate (acyl-PO(4)) to glycerol-3-phosphate (G3P) to form lysophosphatidic acid (LPA). This enzyme utilizes acyl-phosphate as fatty acyl donor, but not acyl-CoA or acyl-ACP. The protein is Glycerol-3-phosphate acyltransferase of Ehrlichia ruminantium (strain Welgevonden).